Reading from the N-terminus, the 800-residue chain is Receptor like protein 26 (800 aa).

An N-terminal signal peptide occupies residues 1–19 (MRLHFCSLLLLYCIVFVSS). The Extracellular segment spans residues 20–733 (FLTTDALACL…EEEDEVIEWK (714 aa)). Residues Asn49, Asn61, Asn83, Asn96, Asn101, and Asn113 are each glycosylated (N-linked (GlcNAc...) asparagine). 12 LRR repeats span residues 89 to 113 (LHQL…EFSN), 115 to 138 (TRLE…ISNL), 139 to 161 (ILLT…VRNL), 162 to 185 (TKLS…LLPT), 187 to 212 (PFLS…SSSS), 214 to 235 (LVRL…ISKL), 236 to 259 (INLN…VFAP), 260 to 281 (LKSL…LSSD), 285 to 307 (PLSL…IFKT), 308 to 332 (LQNL…FWKL), 334 to 357 (RLSI…VLLN), and 358 to 381 (SSVQ…PLGS). Residues Asn145 and Asn160 are each glycosylated (N-linked (GlcNAc...) asparagine). The N-linked (GlcNAc...) asparagine glycan is linked to Asn207. Asn247 is a glycosylation site (N-linked (GlcNAc...) asparagine). N-linked (GlcNAc...) asparagine glycans are attached at residues Asn342 and Asn357. Residues 382 to 401 (IYLSAWNNSFTGNIPLSICN) form an LRR 13; degenerate repeat. Residues Asn388 and Asn401 are each glycosylated (N-linked (GlcNAc...) asparagine). 10 LRR repeats span residues 402–423 (RSSL…PQCL), 424–446 (SNLK…EFHS), 448–471 (AKTQ…LLNC), 472–494 (SSLR…WLKA), 495–519 (LPNL…DRGP), 522–546 (FPEL…FFVN), 591–615 (LTFY…IGLL), 616–639 (KELI…LANV), 640–663 (TELE…LGSL), and 665–688 (FLAY…QFSG). Asn470 carries N-linked (GlcNAc...) asparagine glycosylation. 2 N-linked (GlcNAc...) asparagine glycosylation sites follow: Asn622 and Asn638. The helical transmembrane segment at 734–754 (AVFFGYWPGLLLGLVMAHVIA) threads the bilayer. Over 755-800 (SFKPKWFVKILGPAKGKQVDPVRLFMNLDSRWDSFNNKDTVEEEVI) the chain is Cytoplasmic.

This sequence belongs to the RLP family.

The protein resides in the cell membrane. The chain is Receptor like protein 26 from Arabidopsis thaliana (Mouse-ear cress).